The chain runs to 548 residues: Chaperonin GroEL (548 aa).

ATP-binding positions include 29-32, Lys50, 86-90, Gly414, 478-480, and Asp494; these read TMGP, DGTTT, and NAA.

This sequence belongs to the chaperonin (HSP60) family. In terms of assembly, forms a cylinder of 14 subunits composed of two heptameric rings stacked back-to-back. Interacts with the co-chaperonin GroES.

It is found in the cytoplasm. The catalysed reaction is ATP + H2O + a folded polypeptide = ADP + phosphate + an unfolded polypeptide.. Functionally, together with its co-chaperonin GroES, plays an essential role in assisting protein folding. The GroEL-GroES system forms a nano-cage that allows encapsulation of the non-native substrate proteins and provides a physical environment optimized to promote and accelerate protein folding. The chain is Chaperonin GroEL from Legionella pneumophila (strain Paris).